Here is a 364-residue protein sequence, read N- to C-terminus: Cell cycle control protein 50A (364 aa).

The segment at 1–28 (MAMNYSAKDEVDGGPAGPPGGAAKTRRP) is disordered. At A2 the chain carries N-acetylalanine. Residues 2–49 (AMNYSAKDEVDGGPAGPPGGAAKTRRPDNTAFKQQRLPAWQPILTAGT) lie on the Cytoplasmic side of the membrane. The helical transmembrane segment at 50–70 (VLPTFFIIGLIFIPIGIGIFV) threads the bilayer. Residues 71–328 (TSNNIREIEI…SWMGGKNPFL (258 aa)) are Exoplasmic loop-facing. Disulfide bonds link C91–C104, C94–C102, and C157–C171. N98 carries an N-linked (GlcNAc...) asparagine glycan. The N-linked (GlcNAc...) asparagine glycan is linked to N297. A helical transmembrane segment spans residues 329–349 (GIAYITIGSISFLLGVVLLVI). Topologically, residues 350 to 364 (NHKYRNSSNTADITI) are cytoplasmic.

This sequence belongs to the CDC50/LEM3 family. As to quaternary structure, component of various P4-ATPase flippase complexes which consists of a catalytic alpha subunit and an accessory beta subunit. Interacts with ATP8A1 to form a flippase complex; this complex forms an intermediate phosphoenzyme. The ATP8A2:TMEM30A flippase complex has been purified, and ATP8B1:TMEM30A and ATP8B2:TMEM30A flippase complexes have been shown to form intermediate phosphoenzymes in vitro. Interacts with alpha subunits ATP8A1, ATP8B1, ATP8B2, ATP8B4, ATP10A, ATP10B, ATP10D, ATP11A, ATP11B and ATP11C. N-glycosylated. Contains high mannose-type oligosaccharides. As to expression, expressed in photoreceptor cells; detected in retina outer segment (at protein level). Detected in hepatocytes liver sinusoidal endothelial cells and kidney brush border of the proximal tubules (at protein level). Expressed in brain (at protein level).

It is found in the membrane. The protein localises to the cell membrane. It localises to the golgi apparatus. The protein resides in the cytoplasmic vesicle. Its subcellular location is the secretory vesicle membrane. It is found in the apical cell membrane. Functionally, accessory component of a P4-ATPase flippase complex which catalyzes the hydrolysis of ATP coupled to the transport of aminophospholipids from the outer to the inner leaflet of various membranes and ensures the maintenance of asymmetric distribution of phospholipids. Phospholipid translocation also seems to be implicated in vesicle formation and in uptake of lipid signaling molecules. The beta subunit may assist in binding of the phospholipid substrate. Required for the proper folding, assembly and ER to Golgi exit of the ATP8A2:TMEM30A flippase complex. ATP8A2:TMEM30A may be involved in regulation of neurite outgrowth, and, reconstituted to liposomes, predomiminantly transports phosphatidylserine (PS) and to a lesser extent phosphatidylethanolamine (PE). The ATP8A1:TMEM30A flippase complex seems to play a role in regulation of cell migration probably involving flippase-mediated translocation of phosphatidylethanolamine (PE) at the plasma membrane. Required for the formation of the ATP8A2, ATP8B1 and ATP8B2 P-type ATPAse intermediate phosphoenzymes. Involved in uptake of platelet-activating factor (PAF). Can also mediate the export of alpha subunits ATP8A1, ATP8B1, ATP8B2, ATP8B4, ATP10A, ATP10B, ATP10D, ATP11A, ATP11B and ATP11C from the ER to other membrane localizations. The polypeptide is Cell cycle control protein 50A (Mus musculus (Mouse)).